The following is a 262-amino-acid chain: GTP cyclohydrolase 1 type 2 homolog (262 aa).

Residues His-65, Asp-102, His-222, and Glu-225 each coordinate a divalent metal cation.

Belongs to the GTP cyclohydrolase I type 2/NIF3 family. As to quaternary structure, homohexamer.

This chain is GTP cyclohydrolase 1 type 2 homolog, found in Streptococcus pyogenes serotype M6 (strain ATCC BAA-946 / MGAS10394).